The chain runs to 950 residues: Protocadherin alpha-13 (950 aa).

Residues 1–29 (MLSSWQGGPRPRQLLLWLLILAAWETGSG) form the signal peptide. At 30 to 697 (QLHYSVPEEA…GPEAALVDVN (668 aa)) the chain is on the extracellular side. 6 Cadherin domains span residues 34–133 (SVPE…PPIF), 134–242 (PESK…APEF), 243–350 (YQSV…APEV), 351–455 (TITS…APAF), 456–565 (AQPE…APAL), and 581–678 (MPRS…APQA). N257 and N265 each carry an N-linked (GlcNAc...) asparagine glycan. Residue N548 is glycosylated (N-linked (GlcNAc...) asparagine). A helical transmembrane segment spans residues 698-718 (VYLIIAICAVSSLLVLTLLLY). At 719–950 (TALRCSAPPT…GNSTTDNSDQ (232 aa)) the chain is on the cytoplasmic side. PXXP repeat units lie at residues 734 to 737 (PGKP), 774 to 777 (PSLP), 799 to 802 (PRQP), 832 to 835 (PGGP), 873 to 876 (PGNP), and 891 to 894 (PGSP). The interval 734-894 (PGKPTLVCSS…PDKFIIPGSP (161 aa)) is 6 X 4 AA repeats of P-X-X-P. 2 disordered regions span residues 774–808 (PSLPPCLGSAEGTGQREEDSEGLKEPRQPNPDWRY) and 827–950 (ILRA…NSDQ). Residues 787-800 (GQREEDSEGLKEPR) show a composition bias toward basic and acidic residues. The segment covering 909–923 (DKSDFITFGKKEETK) has biased composition (basic and acidic residues).

The protein resides in the cell membrane. Potential calcium-dependent cell-adhesion protein. May be involved in the establishment and maintenance of specific neuronal connections in the brain. The polypeptide is Protocadherin alpha-13 (PCDHA13) (Pan troglodytes (Chimpanzee)).